The primary structure comprises 781 residues: Coiled-coil and C2 domain-containing protein 1-like (781 aa).

Disordered stretches follow at residues 32-63 (MGRVSRPAAPARGAPPAARGRPAPAAPANVPG), 94-134 (ELNG…APNS), 187-296 (ESEI…AKES), 313-373 (CSAD…TEGN), and 403-447 (GELP…VEGK). Over residues 37-59 (RPAAPARGAPPAARGRPAPAAPA) the composition is skewed to low complexity. A compositionally biased stretch (gly residues) spans 98 to 107 (LVGGGGGGGA). Residues 108 to 118 (APTVPTRAAPR) show a composition bias toward low complexity. Composition is skewed to pro residues over residues 119-129 (APGPSGPPPSA) and 204-222 (PLPPPAPTAQPAHHPPAPP). A compositionally biased stretch (low complexity) spans 244-256 (APAPTAAAPPATK). Residues 269-280 (ILHHRRDLHKQN) show a composition bias toward basic residues. Residues 285–296 (IADKDKESAKES) show a composition bias toward basic and acidic residues. Positions 324–341 (PPSPPPYRKPAPPQPQAP) are enriched in pro residues. A compositionally biased stretch (basic and acidic residues) spans 363–373 (KMAEKAKTEGN). Positions 605 to 741 (YEMRQIPSAD…EHSAEMEESL (137 aa)) constitute a C2 domain.

The protein belongs to the CC2D1 family.

The polypeptide is Coiled-coil and C2 domain-containing protein 1-like (Caenorhabditis elegans).